The primary structure comprises 178 residues: MORN repeat-containing protein 5 (178 aa).

3 MORN repeats span residues 8–30 (YDGD…THTR), 31–53 (YVGE…NGSK), and 54–75 (YEGT…DGLK).

It localises to the cell projection. It is found in the cilium. The protein resides in the flagellum. The sequence is that of MORN repeat-containing protein 5 (morn5) from Danio rerio (Zebrafish).